A 244-amino-acid chain; its full sequence is Flagellar L-ring protein (244 aa).

The N-terminal stretch at 1-18 (MNMRVFIFLIFAAASVSA) is a signal peptide. The N-palmitoyl cysteine moiety is linked to residue Cys19. The S-diacylglycerol cysteine moiety is linked to residue Cys19.

Belongs to the FlgH family. The basal body constitutes a major portion of the flagellar organelle and consists of four rings (L,P,S, and M) mounted on a central rod.

The protein resides in the cell outer membrane. It localises to the bacterial flagellum basal body. Assembles around the rod to form the L-ring and probably protects the motor/basal body from shearing forces during rotation. This chain is Flagellar L-ring protein, found in Jannaschia sp. (strain CCS1).